A 444-amino-acid chain; its full sequence is RAC family serine/threonine-protein kinase homolog (444 aa).

Positions 5 to 100 (PIKHEGFLTK…WIEILINERE (96 aa)) constitute a PH domain. One can recognise a Protein kinase domain in the interval 120-374 (FELLNLVGKG…PNLIKRHPFF (255 aa)). ATP-binding positions include 126-134 (VGKGSFGKV) and Lys149. Residue Asp243 is the Proton acceptor of the active site. Thr278 carries the post-translational modification Phosphothreonine. Residues 375–444 (RSIDWEQLFQ…TYVAESEHLR (70 aa)) form the AGC-kinase C-terminal domain.

The protein belongs to the protein kinase superfamily. AGC Ser/Thr protein kinase family. RAC subfamily.

It catalyses the reaction L-seryl-[protein] + ATP = O-phospho-L-seryl-[protein] + ADP + H(+). It carries out the reaction L-threonyl-[protein] + ATP = O-phospho-L-threonyl-[protein] + ADP + H(+). Its function is as follows. Predominantly involved during the aggregation to control cell polarity and chemotaxis. Phosphorylates talB, gefN, gefS, PI4P 5-kinase and gacQ. The protein is RAC family serine/threonine-protein kinase homolog (pkbA) of Dictyostelium discoideum (Social amoeba).